A 197-amino-acid polypeptide reads, in one-letter code: Probable GTP-binding protein EngB (197 aa).

In terms of domain architecture, EngB-type G spans 22-195 (KRIEIAFVGR…LKVLESVIDF (174 aa)). Residues 30 to 37 (GRSNVGKS), 57 to 61 (GKTRL), 75 to 78 (DLPG), 142 to 145 (TKVD), and 174 to 176 (FSS) contribute to the GTP site. S37 and T59 together coordinate Mg(2+).

The protein belongs to the TRAFAC class TrmE-Era-EngA-EngB-Septin-like GTPase superfamily. EngB GTPase family. Mg(2+) serves as cofactor.

Its function is as follows. Necessary for normal cell division and for the maintenance of normal septation. This chain is Probable GTP-binding protein EngB, found in Clostridium kluyveri (strain ATCC 8527 / DSM 555 / NBRC 12016 / NCIMB 10680 / K1).